The chain runs to 345 residues: Protoheme IX farnesyltransferase (345 aa).

The next 9 helical transmembrane spans lie at 33–53, 54–74, 105–125, 126–146, 154–174, 182–202, 226–246, 247–267, and 315–335; these read VMSLVVFTALTGLLAARTPIH, PLLGAVAVLCIAIGAGASGAL, ATLGVVLSLLSVMLMGMAINW, LAAGLLAFTIVFYAVVYTMWL, IVIGGLAGALPPAIGWAAATG, LMVLIIFLWTPPHFWALSLYI, QILLYSLALIPVCLAPAFTGL, GGWLYLAVSGLGGLVFLTLAV, and ILYLFALFAALLAEAVLGLPI.

It belongs to the UbiA prenyltransferase family. Protoheme IX farnesyltransferase subfamily.

The protein localises to the cell inner membrane. The catalysed reaction is heme b + (2E,6E)-farnesyl diphosphate + H2O = Fe(II)-heme o + diphosphate. The protein operates within porphyrin-containing compound metabolism; heme O biosynthesis; heme O from protoheme: step 1/1. Its function is as follows. Converts heme B (protoheme IX) to heme O by substitution of the vinyl group on carbon 2 of heme B porphyrin ring with a hydroxyethyl farnesyl side group. The sequence is that of Protoheme IX farnesyltransferase from Caulobacter sp. (strain K31).